A 312-amino-acid polypeptide reads, in one-letter code: Protein phosphatase 2A catalytic subunit B (312 aa).

Mn(2+) is bound by residues Asp-55, His-57, Asp-83, and Asn-115. His-116 serves as the catalytic Proton donor. His-165 and His-240 together coordinate Mn(2+).

The protein belongs to the PPP phosphatase family. PP-2A subfamily. As to quaternary structure, component of the Sca1 complex composed of at least gefA, gefH, scaA, phr, and the protein phosphatase 2A subunits pppA and pho2B. The cofactor is Mn(2+).

The protein resides in the cell membrane. The enzyme catalyses O-phospho-L-seryl-[protein] + H2O = L-seryl-[protein] + phosphate. The catalysed reaction is O-phospho-L-threonyl-[protein] + H2O = L-threonyl-[protein] + phosphate. Its function is as follows. Component of the Sca1 complex, a regulator of cell motility, chemotaxis and signal relay. The Sca1 complex is recruited to the plasma membrane in a chemoattractant- and F-actin-dependent manner and is enriched at the leading edge of chemotaxing cells where it regulates F-actin dynamics and signal relay by controlling the activation of rasC and the downstream target of rapamycin complex 2 (TORC2)-Akt/protein kinase B (PKB) pathway. The chain is Protein phosphatase 2A catalytic subunit B from Dictyostelium discoideum (Social amoeba).